Reading from the N-terminus, the 235-residue chain is Ubiquinone/menaquinone biosynthesis C-methyltransferase UbiE (235 aa).

Thr-59, Asp-84, and Ser-123 together coordinate S-adenosyl-L-methionine.

It belongs to the class I-like SAM-binding methyltransferase superfamily. MenG/UbiE family.

It carries out the reaction a 2-demethylmenaquinol + S-adenosyl-L-methionine = a menaquinol + S-adenosyl-L-homocysteine + H(+). The catalysed reaction is a 2-methoxy-6-(all-trans-polyprenyl)benzene-1,4-diol + S-adenosyl-L-methionine = a 5-methoxy-2-methyl-3-(all-trans-polyprenyl)benzene-1,4-diol + S-adenosyl-L-homocysteine + H(+). It participates in quinol/quinone metabolism; menaquinone biosynthesis; menaquinol from 1,4-dihydroxy-2-naphthoate: step 2/2. It functions in the pathway cofactor biosynthesis; ubiquinone biosynthesis. Its function is as follows. Methyltransferase required for the conversion of demethylmenaquinol (DMKH2) to menaquinol (MKH2) and the conversion of 2-polyprenyl-6-methoxy-1,4-benzoquinol (DDMQH2) to 2-polyprenyl-3-methyl-6-methoxy-1,4-benzoquinol (DMQH2). The sequence is that of Ubiquinone/menaquinone biosynthesis C-methyltransferase UbiE from Campylobacter jejuni subsp. jejuni serotype O:2 (strain ATCC 700819 / NCTC 11168).